A 184-amino-acid chain; its full sequence is ATP-dependent protease subunit HslV (184 aa).

Thr12 is a catalytic residue. Residues Ala166, Cys169, and Thr172 each coordinate Na(+).

It belongs to the peptidase T1B family. HslV subfamily. A double ring-shaped homohexamer of HslV is capped on each side by a ring-shaped HslU homohexamer. The assembly of the HslU/HslV complex is dependent on binding of ATP.

It localises to the cytoplasm. The catalysed reaction is ATP-dependent cleavage of peptide bonds with broad specificity.. With respect to regulation, allosterically activated by HslU binding. Functionally, protease subunit of a proteasome-like degradation complex believed to be a general protein degrading machinery. The sequence is that of ATP-dependent protease subunit HslV from Nitrobacter hamburgensis (strain DSM 10229 / NCIMB 13809 / X14).